Consider the following 521-residue polypeptide: Glutamate--tRNA ligase (521 aa).

Residues 30–40 (PSPTGYLHVGG) carry the 'HIGH' region motif. The 'KMSKS' region signature appears at 277 to 281 (KLSKR). K280 lines the ATP pocket.

This sequence belongs to the class-I aminoacyl-tRNA synthetase family. Glutamate--tRNA ligase type 1 subfamily. In terms of assembly, monomer.

It localises to the cytoplasm. It catalyses the reaction tRNA(Glu) + L-glutamate + ATP = L-glutamyl-tRNA(Glu) + AMP + diphosphate. Catalyzes the attachment of glutamate to tRNA(Glu) in a two-step reaction: glutamate is first activated by ATP to form Glu-AMP and then transferred to the acceptor end of tRNA(Glu). This Chlorobium phaeovibrioides (strain DSM 265 / 1930) (Prosthecochloris vibrioformis (strain DSM 265)) protein is Glutamate--tRNA ligase.